A 178-amino-acid polypeptide reads, in one-letter code: Photosystem I assembly protein Ycf4 (178 aa).

Helical transmembrane passes span 19–39 (ILVALMVTIGGIGFLFASLSS) and 61–81 (LIMGLYSLAAALLASYLWAVI).

The protein belongs to the Ycf4 family.

It is found in the cellular thylakoid membrane. Its function is as follows. Seems to be required for the assembly of the photosystem I complex. In Synechococcus sp. (strain CC9311), this protein is Photosystem I assembly protein Ycf4.